The following is a 461-amino-acid chain: Nicotianamine aminotransferase A (461 aa).

The interval 1–29 is disordered; sequence MVHQSNGHGEAAAAAANGKSNGHAAAANG. Positions 11–29 are enriched in low complexity; that stretch reads AAAAAANGKSNGHAAAANG. At K289 the chain carries N6-(pyridoxal phosphate)lysine.

This sequence belongs to the class-I pyridoxal-phosphate-dependent aminotransferase family. It depends on pyridoxal 5'-phosphate as a cofactor. As to expression, expressed in roots, but not in leaves.

The enzyme catalyses nicotianamine + 2-oxoglutarate = 3''-deamino-3''-oxonicotianamine + L-glutamate. In terms of biological role, involved in biosynthesis of mugineic acid family phytosiderophores. This chain is Nicotianamine aminotransferase A, found in Hordeum vulgare (Barley).